The chain runs to 175 residues: ATP synthase subunit b (175 aa).

Residues 20–40 (LIFWTAITFVIVLLILKKIAW) form a helical membrane-spanning segment.

Belongs to the ATPase B chain family. As to quaternary structure, F-type ATPases have 2 components, F(1) - the catalytic core - and F(0) - the membrane proton channel. F(1) has five subunits: alpha(3), beta(3), gamma(1), delta(1), epsilon(1). F(0) has four main subunits: a(1), b(2) and c(10-14). The alpha and beta chains form an alternating ring which encloses part of the gamma chain. F(1) is attached to F(0) by a central stalk formed by the gamma and epsilon chains, while a peripheral stalk is formed by the delta and b chains.

The protein resides in the cell inner membrane. In terms of biological role, f(1)F(0) ATP synthase produces ATP from ADP in the presence of a proton or sodium gradient. F-type ATPases consist of two structural domains, F(1) containing the extramembraneous catalytic core and F(0) containing the membrane proton channel, linked together by a central stalk and a peripheral stalk. During catalysis, ATP synthesis in the catalytic domain of F(1) is coupled via a rotary mechanism of the central stalk subunits to proton translocation. Functionally, component of the F(0) channel, it forms part of the peripheral stalk, linking F(1) to F(0). The protein is ATP synthase subunit b of Pelodictyon phaeoclathratiforme (strain DSM 5477 / BU-1).